Consider the following 921-residue polypeptide: GPI ethanolamine phosphate transferase 1 (921 aa).

The Cytoplasmic portion of the chain corresponds to Met-1–Leu-9. Residues Ile-10 to Ile-30 traverse the membrane as a helical segment. Over Ser-31–Thr-457 the chain is Lumenal. Residues Asn-90, Asn-138, Asn-198, Asn-262, and Asn-286 are each glycosylated (N-linked (GlcNAc...) asparagine). The chain crosses the membrane as a helical span at residues Ile-458–Phe-478. Residues Ile-479–Pro-488 lie on the Cytoplasmic side of the membrane. Residues Ser-489 to Tyr-509 traverse the membrane as a helical segment. At Gln-510 to Phe-516 the chain is on the lumenal side. Residues Tyr-517–Ile-537 form a helical membrane-spanning segment. The Cytoplasmic portion of the chain corresponds to Arg-538–Glu-552. Residues Ser-553–His-573 form a helical membrane-spanning segment. The Lumenal portion of the chain corresponds to Arg-574–Trp-575. Residues Ile-576 to Leu-596 form a helical membrane-spanning segment. Residues Phe-597 to Asn-599 are Cytoplasmic-facing. A helical membrane pass occupies residues Leu-600–Ile-620. A topological domain (lumenal) is located at residue Glu-621. Residues Asn-622 to Met-642 form a helical membrane-spanning segment. Residues Arg-643–His-654 are Cytoplasmic-facing. A helical transmembrane segment spans residues Leu-655–Ile-675. Topologically, residues Ser-676 to Pro-684 are lumenal. A helical transmembrane segment spans residues Ala-685–Leu-705. Topologically, residues His-706–Ser-728 are cytoplasmic. Residues Phe-729–Val-749 traverse the membrane as a helical segment. Residues Gln-750–Val-777 are Lumenal-facing. Residues Ala-778 to Ile-798 form a helical membrane-spanning segment. The Cytoplasmic portion of the chain corresponds to Ser-799–Gly-819. Residues Ala-820 to Met-840 traverse the membrane as a helical segment. At Asn-841–Tyr-849 the chain is on the lumenal side. Residues Thr-850–Leu-870 traverse the membrane as a helical segment. Over Lys-871 to Asp-878 the chain is Cytoplasmic. Residues Ile-879–Leu-899 traverse the membrane as a helical segment. Topologically, residues Glu-900 to Asn-921 are lumenal. An N-linked (GlcNAc...) asparagine glycan is attached at Asn-909.

This sequence belongs to the PIGG/PIGN/PIGO family. PIGN subfamily.

It localises to the endoplasmic reticulum membrane. It participates in glycolipid biosynthesis; glycosylphosphatidylinositol-anchor biosynthesis. In terms of biological role, ethanolamine phosphate transferase involved in glycosylphosphatidylinositol-anchor biosynthesis. Transfers ethanolamine phosphate to the first alpha-1,4-linked mannose of the glycosylphosphatidylinositol precursor of GPI-anchor. The chain is GPI ethanolamine phosphate transferase 1 (MCD4) from Candida glabrata (strain ATCC 2001 / BCRC 20586 / JCM 3761 / NBRC 0622 / NRRL Y-65 / CBS 138) (Yeast).